The chain runs to 124 residues: Mini zinc finger protein 4 (124 aa).

Residues Y35–V84 form a ZF-HD dimerization-type; degenerate zinc finger.

As to quaternary structure, homo- and heterodimers.

Its subcellular location is the cytoplasm. Inhibits zinc finger homeodomain (ZHD) transcription factors, by interacting with them to prevent both their nuclear localization and their DNA-binding properties. The chain is Mini zinc finger protein 4 (MIF4) from Oryza sativa subsp. japonica (Rice).